Here is a 177-residue protein sequence, read N- to C-terminus: Large ribosomal subunit protein uL6 (177 aa).

This sequence belongs to the universal ribosomal protein uL6 family. As to quaternary structure, part of the 50S ribosomal subunit.

Functionally, this protein binds to the 23S rRNA, and is important in its secondary structure. It is located near the subunit interface in the base of the L7/L12 stalk, and near the tRNA binding site of the peptidyltransferase center. The sequence is that of Large ribosomal subunit protein uL6 from Pectobacterium carotovorum subsp. carotovorum (strain PC1).